The primary structure comprises 238 residues: Ubiquinone biosynthesis O-methyltransferase (238 aa).

4 residues coordinate S-adenosyl-L-methionine: Arg38, Gly57, Asp78, and Leu124.

This sequence belongs to the methyltransferase superfamily. UbiG/COQ3 family.

It carries out the reaction a 3-demethylubiquinol + S-adenosyl-L-methionine = a ubiquinol + S-adenosyl-L-homocysteine + H(+). It catalyses the reaction a 3-(all-trans-polyprenyl)benzene-1,2-diol + S-adenosyl-L-methionine = a 2-methoxy-6-(all-trans-polyprenyl)phenol + S-adenosyl-L-homocysteine + H(+). The protein operates within cofactor biosynthesis; ubiquinone biosynthesis. Its function is as follows. O-methyltransferase that catalyzes the 2 O-methylation steps in the ubiquinone biosynthetic pathway. This chain is Ubiquinone biosynthesis O-methyltransferase, found in Marinobacter nauticus (strain ATCC 700491 / DSM 11845 / VT8) (Marinobacter aquaeolei).